Here is an 81-residue protein sequence, read N- to C-terminus: Photosystem I iron-sulfur center (81 aa).

4Fe-4S ferredoxin-type domains are found at residues 1–31 and 39–68; these read MAHSVKIYDTCIGCTQCVRACPTDVLEMVPW and IASAPRTEDCVGCKRCESACPTDYLSVRVY. Residues cysteine 11, cysteine 14, cysteine 17, cysteine 21, cysteine 48, cysteine 51, cysteine 54, and cysteine 58 each contribute to the [4Fe-4S] cluster site.

The eukaryotic PSI reaction center is composed of at least 11 subunits. [4Fe-4S] cluster is required as a cofactor.

The protein resides in the plastid. It is found in the chloroplast thylakoid membrane. The enzyme catalyses reduced [plastocyanin] + hnu + oxidized [2Fe-2S]-[ferredoxin] = oxidized [plastocyanin] + reduced [2Fe-2S]-[ferredoxin]. Apoprotein for the two 4Fe-4S centers FA and FB of photosystem I (PSI); essential for photochemical activity. FB is the terminal electron acceptor of PSI, donating electrons to ferredoxin. The C-terminus interacts with PsaA/B/D and helps assemble the protein into the PSI complex. Required for binding of PsaD and PsaE to PSI. PSI is a plastocyanin-ferredoxin oxidoreductase, converting photonic excitation into a charge separation, which transfers an electron from the donor P700 chlorophyll pair to the spectroscopically characterized acceptors A0, A1, FX, FA and FB in turn. The sequence is that of Photosystem I iron-sulfur center from Welwitschia mirabilis (Tree tumbo).